A 242-amino-acid polypeptide reads, in one-letter code: Probable transcriptional regulatory protein STH1004 (242 aa).

This sequence belongs to the TACO1 family.

The protein resides in the cytoplasm. The polypeptide is Probable transcriptional regulatory protein STH1004 (Symbiobacterium thermophilum (strain DSM 24528 / JCM 14929 / IAM 14863 / T)).